A 956-amino-acid chain; its full sequence is UvrABC system protein A (956 aa).

33 to 40 (GLSGSGKS) is a binding site for ATP. A C4-type zinc finger spans residues 252-279 (CPYCGFSVGELEPRMFSFNSPFGACPTC). ABC transporter domains lie at 309–587 (WRPI…KNSI) and 607–936 (GNGL…KYLK). ATP is bound at residue 639 to 646 (GVSGSGKS). The C4-type zinc finger occupies 738–764 (CEACKGDGIIKIEMHFLPDVYVPCEVC).

This sequence belongs to the ABC transporter superfamily. UvrA family. As to quaternary structure, forms a heterotetramer with UvrB during the search for lesions.

The protein resides in the cytoplasm. The UvrABC repair system catalyzes the recognition and processing of DNA lesions. UvrA is an ATPase and a DNA-binding protein. A damage recognition complex composed of 2 UvrA and 2 UvrB subunits scans DNA for abnormalities. When the presence of a lesion has been verified by UvrB, the UvrA molecules dissociate. This Listeria monocytogenes serovar 1/2a (strain ATCC BAA-679 / EGD-e) protein is UvrABC system protein A.